A 617-amino-acid chain; its full sequence is E3 ubiquitin-protein ligase synoviolin (617 aa).

Topologically, residues M1 to T4 are cytoplasmic. The interval M1 to A84 is necessary and sufficient for SEL1L interaction. An involved in FAM8A1 interaction region spans residues M1–A251. Residues A5 to L25 form a helical membrane-spanning segment. At K26–P41 the chain is on the lumenal side. Residues S42–G62 traverse the membrane as a helical segment. The Cytoplasmic segment spans residues K63–D98. A helical transmembrane segment spans residues F99 to L119. Residues A120 to R140 lie on the Lumenal side of the membrane. The chain crosses the membrane as a helical span at residues I141–H161. Residues S162–S169 lie on the Cytoplasmic side of the membrane. The chain crosses the membrane as a helical span at residues V170–I190. Residues K191–V224 are Lumenal-facing. Residues L225 to I245 traverse the membrane as a helical segment. The tract at residues K236 to R270 is interaction with p53/TP53. Residues R246–H617 are Cytoplasmic-facing. C291, C294, C307, H309, H312, C315, C326, and C329 together coordinate Zn(2+). The segment at C291–R330 adopts an RING-type; atypical zinc-finger fold. Disordered regions lie at residues S337 to P375, P393 to G453, and R535 to H617. The segment covering Q341–P375 has biased composition (pro residues). Low complexity predominate over residues P417–A451. Residues G480–R535 are HAF-H domain; necessary to form higher-order Hrd1 complexes. Residues A537–P569 show a composition bias toward low complexity. Positions E591–A600 are enriched in acidic residues. S613 is subject to Phosphoserine.

This sequence belongs to the HRD1 family. Homodimer. Interacts with p53/TP53. Interacts with HTT. Component of the HRD1 complex, which comprises at least SYNV1/HRD1, DERL1/2, FAM8A1, HERPUD1/HERP, OS9, SEL1L and UBE2J1. FAM8A1 is stabilized by interaction with SYNV1, which prevents its proteasomal degradation. OS9 and UBE2J1 recruitment to the complex may be mediated by SEL1L. SYNV1 assembles with SEL1L and FAM8A1 through its transmembrane domains, but interaction with its cytoplasmic domain is required to confer stability to FAM8A1 and enhance recruitment of HERPUD1. The HRD1 complex also associates with VIMP and may transfer misfolded proteins from the endoplasmic reticulum to VCP. May form a complex with ERLEC1, HSPA5, OS9 and SEL1L. Interacts with VCP. Interacts with UBXN6. Interacts with BAG6. Interacts with NFE2L1. Interacts (via N-terminus) with components of the pre-B cell receptor, including IGLL1 and VPREB1. Interacts with CREB3L3; this interaction leads to CREB3L3 ubiquitination and proteasomal degradation. Not N-glycosylated. Post-translationally, auto-ubiquitinated. Deubiquitinated by USP19. Ubiquitously expressed, with highest levels in liver and kidney (at protein level). Up-regulated in synovial tissues from patients with rheumatoid arthritis (at protein level).

Its subcellular location is the endoplasmic reticulum membrane. The catalysed reaction is S-ubiquitinyl-[E2 ubiquitin-conjugating enzyme]-L-cysteine + [acceptor protein]-L-lysine = [E2 ubiquitin-conjugating enzyme]-L-cysteine + N(6)-ubiquitinyl-[acceptor protein]-L-lysine.. Its pathway is protein modification; protein ubiquitination. In terms of biological role, E3 ubiquitin-protein ligase which accepts ubiquitin specifically from endoplasmic reticulum-associated UBC7 E2 ligase and transfers it to substrates, promoting their degradation. Component of the endoplasmic reticulum quality control (ERQC) system also called ER-associated degradation (ERAD) involved in ubiquitin-dependent degradation of misfolded endoplasmic reticulum proteins. Also promotes the degradation of normal but naturally short-lived proteins such as SGK. Protects cells from ER stress-induced apoptosis. Protects neurons from apoptosis induced by polyglutamine-expanded huntingtin (HTT) or unfolded GPR37 by promoting their degradation. Sequesters p53/TP53 in the cytoplasm and promotes its degradation, thereby negatively regulating its biological function in transcription, cell cycle regulation and apoptosis. Mediates the ubiquitination and subsequent degradation of cytoplasmic NFE2L1. During the early stage of B cell development, required for degradation of the pre-B cell receptor (pre-BCR) complex, hence supporting further differentiation into mature B cells. This is E3 ubiquitin-protein ligase synoviolin from Homo sapiens (Human).